The chain runs to 353 residues: 4-hydroxy-2-oxovalerate aldolase 1 (353 aa).

Residues valine 14–alanine 266 enclose the Pyruvate carboxyltransferase domain. Arginine 22–aspartate 23 contacts substrate. Aspartate 23 is a Mn(2+) binding site. The active-site Proton acceptor is histidine 26. Residues serine 176 and histidine 205 each coordinate substrate. Histidine 205 and histidine 207 together coordinate Mn(2+). Substrate is bound at residue tyrosine 296.

Belongs to the 4-hydroxy-2-oxovalerate aldolase family.

The catalysed reaction is (S)-4-hydroxy-2-oxopentanoate = acetaldehyde + pyruvate. This Mycobacterium sp. (strain KMS) protein is 4-hydroxy-2-oxovalerate aldolase 1.